A 204-amino-acid chain; its full sequence is Peptide deformylase (204 aa).

The Fe cation site is built by C131 and H174. The active site involves E175. H178 contacts Fe cation.

It belongs to the polypeptide deformylase family. The cofactor is Fe(2+).

It catalyses the reaction N-terminal N-formyl-L-methionyl-[peptide] + H2O = N-terminal L-methionyl-[peptide] + formate. In terms of biological role, removes the formyl group from the N-terminal Met of newly synthesized proteins. Requires at least a dipeptide for an efficient rate of reaction. N-terminal L-methionine is a prerequisite for activity but the enzyme has broad specificity at other positions. This chain is Peptide deformylase, found in Streptococcus equi subsp. zooepidemicus (strain MGCS10565).